Here is an 89-residue protein sequence, read N- to C-terminus: Small ribosomal subunit protein uS15 (89 aa).

It belongs to the universal ribosomal protein uS15 family. In terms of assembly, part of the 30S ribosomal subunit. Forms a bridge to the 50S subunit in the 70S ribosome, contacting the 23S rRNA.

In terms of biological role, one of the primary rRNA binding proteins, it binds directly to 16S rRNA where it helps nucleate assembly of the platform of the 30S subunit by binding and bridging several RNA helices of the 16S rRNA. Forms an intersubunit bridge (bridge B4) with the 23S rRNA of the 50S subunit in the ribosome. The protein is Small ribosomal subunit protein uS15 of Chloroherpeton thalassium (strain ATCC 35110 / GB-78).